The sequence spans 165 residues: Lymphocyte antigen 6K (165 aa).

Positions 1-17 are cleaved as a signal peptide; the sequence is MALLALLLVVALPRVWT. Asparagine 20 carries an N-linked (GlcNAc...) asparagine glycan. In terms of domain architecture, UPAR/Ly6 spans 47–141; it reads ERENTFECQN…VFKEYAGSMG (95 aa). Glycine 138 carries GPI-anchor amidated glycine lipidation. Residues 139–165 constitute a propeptide, removed in mature form; that stretch reads SMGESCGGLWLAILLLLASIAAGLSLS.

Interacts with TEX101. As to expression, specifically expressed in testis (at protein level).

The protein resides in the secreted. It localises to the cytoplasm. It is found in the cell membrane. Its subcellular location is the cytoplasmic vesicle. The protein localises to the secretory vesicle. The protein resides in the acrosome. It localises to the membrane raft. Its function is as follows. Required for sperm migration into the oviduct and male fertility by controlling binding of sperm to zona pellucida. May play a role in cell growth. In Homo sapiens (Human), this protein is Lymphocyte antigen 6K.